Reading from the N-terminus, the 120-residue chain is Large ribosomal subunit protein uL18 (120 aa).

The protein belongs to the universal ribosomal protein uL18 family. In terms of assembly, part of the 50S ribosomal subunit; part of the 5S rRNA/L5/L18/L25 subcomplex. Contacts the 5S and 23S rRNAs.

In terms of biological role, this is one of the proteins that bind and probably mediate the attachment of the 5S RNA into the large ribosomal subunit, where it forms part of the central protuberance. The sequence is that of Large ribosomal subunit protein uL18 from Methylocella silvestris (strain DSM 15510 / CIP 108128 / LMG 27833 / NCIMB 13906 / BL2).